The primary structure comprises 734 residues: Origin of replication complex subunit 3 (734 aa).

Disordered regions lie at residues 1–25 (MAPSGTVADPPQCSTTDSFNSSDTA) and 532–554 (GQRQGLPNSPKKHASRSNSKLEK). The segment covering 12–24 (QCSTTDSFNSSDT) has biased composition (polar residues).

This sequence belongs to the ORC3 family. As to quaternary structure, component of the origin recognition complex (ORC) composed of at least ORC1 (ORC1A or ORC1B), ORC2, ORC3, ORC4, ORC5 and ORC6. ORC is regulated in a cell-cycle and development dependent manner. It is sequentially assembled at the exit from anaphase of mitosis and disassembled as cells enter S phase. Interacts directly with ORC1A, ORC2, ORC4, ORC5 and ORC6. In terms of tissue distribution, follow a cell-cycle regulation with a peak at the G1/S-phase. Mostly expressed in siliques and flowers, and, to a lower exent, in flower buds, leaves, roots and stems.

The protein localises to the nucleus. Component of the origin recognition complex (ORC) that binds origins of replication. DNA-binding is ATP-dependent. The specific DNA sequences that define origins of replication have not been identified yet. This Arabidopsis thaliana (Mouse-ear cress) protein is Origin of replication complex subunit 3.